Consider the following 38-residue polypeptide: Large ribosomal subunit protein bL36 (38 aa).

It belongs to the bacterial ribosomal protein bL36 family.

This is Large ribosomal subunit protein bL36 from Anaeromyxobacter dehalogenans (strain 2CP-1 / ATCC BAA-258).